The following is a 576-amino-acid chain: Putative SPbeta prophage-derived single-strand DNA-specific exonuclease YorK (576 aa).

Position 473 is a phosphotyrosine (Tyr-473).

It belongs to the RecJ family.

Functionally, putative single-stranded-DNA-specific exonuclease. This is Putative SPbeta prophage-derived single-strand DNA-specific exonuclease YorK (yorK) from Bacillus subtilis (strain 168).